The primary structure comprises 368 residues: Protein pxr1 (368 aa).

2 disordered regions span residues 1-28 and 161-339; these read MGLA…TDSF and KEKA…PMGI. A compositionally biased stretch (polar residues) spans 15–27; it reads DPNNTRWSGNTDS. One can recognise a G-patch domain in the interval 25-79; sequence TDSFGHRMMKSQGWTPGEYLGAKDAAHAEFHTEANASHIRVVIKDNTLGLGAKIG. Acidic residues predominate over residues 168–182; the sequence is SSEESDSSSDEEEEK. 4 stretches are compositionally biased toward basic residues: residues 209–226, 242–254, 271–283, and 301–312; these read SKKS…KSKK, KSKK…KSKS, KARK…KKRK, and SSKKSKKDKHKS. A compositionally biased stretch (low complexity) spans 313–324; that stretch reads PSTSKTSTKEST. Polar residues predominate over residues 325–334; it reads PIVSESSGRS.

It belongs to the PINX1 family.

The protein resides in the nucleus. The protein localises to the nucleolus. Involved in rRNA-processing at A0, A1 and A2 sites and negatively regulates telomerase. The sequence is that of Protein pxr1 (pxr1) from Botryotinia fuckeliana (strain B05.10) (Noble rot fungus).